Here is a 246-residue protein sequence, read N- to C-terminus: 2-aminoethylphosphonate cytidylyltransferase (246 aa).

CMP-(2-aminoethyl)phosphonate-binding residues include Ala-19, Gly-20, Lys-34, Ser-97, Glu-114, and Ala-115. Residues Asp-116 and Asp-145 each coordinate Mg(2+). Residues Asp-145, Lys-161, and Asp-202 each coordinate CMP-(2-aminoethyl)phosphonate. Mg(2+)-binding residues include Glu-226 and Asp-228.

It belongs to the LicC/PntC cytidylyltransferase family. As to quaternary structure, monomer. The cofactor is Mg(2+).

It catalyses the reaction (2-aminoethyl)phosphonate + CTP = CMP-(2-aminoethyl)phosphonate + diphosphate. It functions in the pathway phosphorus metabolism; phosphonate biosynthesis. In terms of biological role, cytidylyltransferase involved in the biosynthesis of cell-surface phosphonates. Catalyzes the activation of 2-aminoethylphosphonate (AEP) to CMP-2-aminoethylphosphonate (CMP-AEP). Can also use phosphocholine, with much lower efficiency. Exhibits strong activity towards CTP, limited activity towards ATP and no activity with GTP. The chain is 2-aminoethylphosphonate cytidylyltransferase from Lancefieldella rimae (strain ATCC 49626 / DSM 7090 / CCUG 31168 / NBRC 15546 / VPI D140H-11A) (Atopobium rimae).